A 423-amino-acid chain; its full sequence is COP9 signalosome complex subunit 3 (423 aa).

The region spanning 197-365 (NFERALYFFE…GMVCFHDNPE (169 aa)) is the PCI domain. The disordered stretch occupies residues 402–423 (QFVQKSMGTQEDDVGSKTSSYS).

This sequence belongs to the CSN3 family. Component of the CSN complex, probably composed of cops1, cops2, cops3, cops4, cops5, cops6, cops7, cops8 and cops9.

It localises to the cytoplasm. The protein localises to the nucleus. In terms of biological role, component of the COP9 signalosome complex (CSN), a complex involved in various cellular and developmental processes. The CSN complex is an essential regulator of the ubiquitin (Ubl) conjugation pathway by mediating the deneddylation of the cullin subunits of E3 ligase complexes, leading to modify the Ubl ligase activity. This Danio rerio (Zebrafish) protein is COP9 signalosome complex subunit 3 (cops3).